Reading from the N-terminus, the 449-residue chain is Protein phosphatase fem-2 (449 aa).

The tract at residues 28–34 is interaction with fem-1 and fem-3; the sequence is EEAFADE. The tract at residues 54 to 56 is interaction with fem-3; that stretch reads IRF. One can recognise a PPM-type phosphatase domain in the interval 160-424; it reads GIHVSGDQLK…DNVSVVIGFL (265 aa). Asp202, Gly203, Asp370, and Asp415 together coordinate Mg(2+).

The protein belongs to the PP2C family. Component of a complex containing fem-1, fem-2 and fem-3. Interacts (via N-terminus) with fem-1 and fem-3. Component of the CBC(fem-1) E3 ubiquitin-protein ligase complex, at least composed of cul-2, elc-1, tra-1, fem-1, fem-2 and fem-3; mediates the ubiquitination and subsequent proteasomal degradation of tra-1. Interacts with tra-1. Interacts with sel-10. Mg(2+) serves as cofactor. It depends on Mn(2+) as a cofactor.

It carries out the reaction O-phospho-L-seryl-[protein] + H2O = L-seryl-[protein] + phosphate. The enzyme catalyses O-phospho-L-threonyl-[protein] + H2O = L-threonyl-[protein] + phosphate. Functionally, dephosphorylates auto-phosphorylated Ca(2+)/calmodulin-dependent protein kinase unc-43/CAMKII in vitro. Involved in the regulation of sex determination. Together with fem-3, required for male sexual development by promoting the proteasomal-mediated degradation of tra-1, a transcription repressor of male-specific genes. Promotes apoptosis. This Caenorhabditis elegans protein is Protein phosphatase fem-2.